Consider the following 360-residue polypeptide: Peptide chain release factor 1 (360 aa).

At Gln235 the chain carries N5-methylglutamine.

This sequence belongs to the prokaryotic/mitochondrial release factor family. In terms of processing, methylated by PrmC. Methylation increases the termination efficiency of RF1.

Its subcellular location is the cytoplasm. Functionally, peptide chain release factor 1 directs the termination of translation in response to the peptide chain termination codons UAG and UAA. The chain is Peptide chain release factor 1 from Blochmanniella pennsylvanica (strain BPEN).